Reading from the N-terminus, the 402-residue chain is Mitochondrial inner membrane protein OXA1 (402 aa).

The transit peptide at 1-42 (MFKLTSRLVTSRFAASSRLATARTIVLPRPHPSWISFQAKRF) directs the protein to the mitochondrion. Residues 43–118 (NSTGPNANDV…PSDIIQHVLE (76 aa)) are Mitochondrial intermembrane-facing. A helical membrane pass occupies residues 119 to 139 (AVHVYSGLPWWGTIAATTILI). At 140–199 (RCLMFPLYVKSSDTVARNSHIKPELDALNNKLMSTTDLQQGQLVAMQRKKLLSSHGIKNR) the chain is on the mitochondrial matrix side. A helical transmembrane segment spans residues 200 to 220 (WLAAPMLQIPIALGFFNALRH). The Mitochondrial intermembrane segment spans residues 221 to 239 (MANYPVDGFANQGVAWFTD). The chain crosses the membrane as a helical span at residues 240 to 260 (LTQADPYLGLQVITAAVFISF). The Mitochondrial matrix segment spans residues 261–275 (TRLGGETGAQQFSSP). A helical membrane pass occupies residues 276–292 (MKRLFTILPIISIPATM). Residues 293–297 (NLSSA) lie on the Mitochondrial intermembrane side of the membrane. Residues 298–316 (VVLYFAFNGAFSVLQTMIL) form a helical membrane-spanning segment. Over 317-402 (RNKWVRSKLK…HKSNFINNKK (86 aa)) the chain is Mitochondrial matrix. The span at 366 to 385 (RQLMQDNEKKLQESFKEKRQ) shows a compositional bias: basic and acidic residues. The tract at residues 366–386 (RQLMQDNEKKLQESFKEKRQN) is disordered.

This sequence belongs to the OXA1/ALB3/YidC family. Interacts with the large ribosome subunit of mitochondrial ribosome. Interacts directly with MRP20. Interacts with OXA1.

It localises to the mitochondrion inner membrane. In terms of biological role, mitochondrial inner membrane insertase that mediates the insertion of both mitochondrion-encoded precursors and nuclear-encoded proteins from the matrix into the inner membrane. Links mitoribosomes with the inner membrane. Forms pores capable of accommodating translocating protein segments. Essential for the activity and assembly of cytochrome c oxidase. Plays a central role in the translocation and export of the N-terminal part of the COX2 protein into the mitochondrial intermembrane space. The polypeptide is Mitochondrial inner membrane protein OXA1 (Saccharomyces cerevisiae (strain ATCC 204508 / S288c) (Baker's yeast)).